We begin with the raw amino-acid sequence, 59 residues long: Chromatin protein Cren7 (59 aa).

The protein belongs to the Cren7 family. Monomer. Methylated at multiple sites, to varying extents.

The protein localises to the chromosome. It localises to the cytoplasm. In terms of biological role, a chromatin protein, binds double-stranded DNA without sequence specificity. Constrains negative DNA supercoils. The protein is Chromatin protein Cren7 of Sulfolobus acidocaldarius (strain ATCC 33909 / DSM 639 / JCM 8929 / NBRC 15157 / NCIMB 11770).